Consider the following 141-residue polypeptide: Large ribosomal subunit protein uL6 (141 aa).

Belongs to the universal ribosomal protein uL6 family.

The sequence is that of Large ribosomal subunit protein uL6 from Haemonchus contortus (Barber pole worm).